We begin with the raw amino-acid sequence, 274 residues long: 2-dehydro-3-deoxyphosphooctonate aldolase (274 aa).

The protein belongs to the KdsA family.

The protein localises to the cytoplasm. It carries out the reaction D-arabinose 5-phosphate + phosphoenolpyruvate + H2O = 3-deoxy-alpha-D-manno-2-octulosonate-8-phosphate + phosphate. The protein operates within carbohydrate biosynthesis; 3-deoxy-D-manno-octulosonate biosynthesis; 3-deoxy-D-manno-octulosonate from D-ribulose 5-phosphate: step 2/3. It functions in the pathway bacterial outer membrane biogenesis; lipopolysaccharide biosynthesis. The protein is 2-dehydro-3-deoxyphosphooctonate aldolase of Rickettsia bellii (strain OSU 85-389).